Reading from the N-terminus, the 252-residue chain is Sulfoacetaldehyde reductase 2 (252 aa).

Leucine 6–isoleucine 30 contacts NADP(+). Serine 139 contacts substrate. Tyrosine 152 acts as the Proton acceptor in catalysis.

Belongs to the short-chain dehydrogenases/reductases (SDR) family. In terms of assembly, homodimer and heterotetramer.

It catalyses the reaction 2-hydroxyethane-1-sulfonate + NADP(+) = sulfoacetaldehyde + NADPH + H(+). The protein operates within organosulfur degradation. Its function is as follows. Catalyzes the formation of isethionate from 2-sulfoacetaldehyde in the deaminative pathway of taurine. Constitutively expressed enzyme that only mediates a small part of the activity observed in taurine-grown cells. This chain is Sulfoacetaldehyde reductase 2 (isfD2), found in Chromohalobacter salexigens (strain ATCC BAA-138 / DSM 3043 / CIP 106854 / NCIMB 13768 / 1H11).